A 78-amino-acid chain; its full sequence is Major outer membrane lipoprotein Lpp (78 aa).

A signal peptide spans 1–20 (MNRTKLVLGAVILGSTLLAG). Cys-21 is lipidated: N-palmitoyl cysteine. The S-diacylglycerol cysteine moiety is linked to residue Cys-21. Residues 22-75 (SSNAKIDQLSTDVQTLNAKVDQLSNDVTAIRSDVQAAKDDAARANQRLDNQAHS) are a coiled coil. Repeats lie at residues 24–34 (NAKIDQLSTDV) and 38–48 (NAKVDQLSNDV). N6-murein peptidoglycan lysine is present on Lys-78.

Belongs to the Lpp family. As to quaternary structure, homotrimer.

Its subcellular location is the cell outer membrane. It localises to the secreted. The protein resides in the cell wall. A highly abundant outer membrane lipoprotein that controls the distance between the inner and outer membranes. The only protein known to be covalently linked to the peptidoglycan network (PGN). Also non-covalently binds the PGN. The link between the cell outer membrane and PGN contributes to maintenance of the structural and functional integrity of the cell envelope, and maintains the correct distance between the PGN and the outer membrane. The sequence is that of Major outer membrane lipoprotein Lpp from Erwinia amylovora (Fire blight bacteria).